The sequence spans 557 residues: Dihydroxy-acid dehydratase (557 aa).

Asp78 contributes to the Mg(2+) binding site. Cys119 contacts [2Fe-2S] cluster. The Mg(2+) site is built by Asp120 and Lys121. Lys121 is subject to N6-carboxylysine. Cys192 serves as a coordination point for [2Fe-2S] cluster. Glu446 lines the Mg(2+) pocket. Ser472 (proton acceptor) is an active-site residue.

It belongs to the IlvD/Edd family. In terms of assembly, homodimer. The cofactor is [2Fe-2S] cluster. Requires Mg(2+) as cofactor.

It carries out the reaction (2R)-2,3-dihydroxy-3-methylbutanoate = 3-methyl-2-oxobutanoate + H2O. The enzyme catalyses (2R,3R)-2,3-dihydroxy-3-methylpentanoate = (S)-3-methyl-2-oxopentanoate + H2O. Its pathway is amino-acid biosynthesis; L-isoleucine biosynthesis; L-isoleucine from 2-oxobutanoate: step 3/4. It participates in amino-acid biosynthesis; L-valine biosynthesis; L-valine from pyruvate: step 3/4. Its function is as follows. Functions in the biosynthesis of branched-chain amino acids. Catalyzes the dehydration of (2R,3R)-2,3-dihydroxy-3-methylpentanoate (2,3-dihydroxy-3-methylvalerate) into 2-oxo-3-methylpentanoate (2-oxo-3-methylvalerate) and of (2R)-2,3-dihydroxy-3-methylbutanoate (2,3-dihydroxyisovalerate) into 2-oxo-3-methylbutanoate (2-oxoisovalerate), the penultimate precursor to L-isoleucine and L-valine, respectively. This chain is Dihydroxy-acid dehydratase, found in Campylobacter curvus (strain 525.92).